The primary structure comprises 859 residues: Leucine--tRNA ligase (859 aa).

A 'HIGH' region motif is present at residues 42–52 (PYPSGRLHMGH). Positions 618–622 (KMSKS) match the 'KMSKS' region motif. Lys621 serves as a coordination point for ATP.

This sequence belongs to the class-I aminoacyl-tRNA synthetase family.

The protein localises to the cytoplasm. The enzyme catalyses tRNA(Leu) + L-leucine + ATP = L-leucyl-tRNA(Leu) + AMP + diphosphate. The sequence is that of Leucine--tRNA ligase from Shewanella sp. (strain ANA-3).